A 510-amino-acid polypeptide reads, in one-letter code: MIWHVQNENFILDSTRIFMKAFHLLLFQGSSIFPECILIFGLILLLMIDSTSDQKDRPWFYFISSTSLVISITALLFRWREEPIISFSGNFQTNNFNEIFQFLILLCSTLCIPLSVEYIECTEMAITEFLLFVLTATLGGMFLCGANDLITIFVAPECFSLCSYLLSGYTKRDLRSNEATMKYLLMGGASSSILVHGFSWLYGSSGGEIELQEIVNGLINTQMYNSPGISIALISITVGLGFKLSPAPFHQWTPDVYEGSPTPVVAFLSVTSKVAASASATRILDIPFYFSSNEWHLLLEILAILSMILGNLLAITQTSMKRMLAYSSIGQIGYVIIGIIVGDSNDGYASMITYMLFYISMNLGTFACIVLFGLRTGTDNIRDYAGLYTKDPFLALSLALCLLSLGGLPPLAGFFGKLYLFWCGWQAGLYLLVSIGLLTSVLSIYYYLKIIKLLMTGRNQEITPYVRNYRRSPLRSNNSIELSMTVCVIASTIPGISMNPILAIAQDTLF.

12 helical membrane passes run 24–44, 59–79, 99–119, 124–144, 149–169, 183–203, 229–249, 295–315, 323–343, 354–374, 395–415, and 418–438; these read LLLFQGSSIFPECILIFGLIL, WFYFISSTSLVISITALLFRW, IFQFLILLCSTLCIPLSVEYI, MAITEFLLFVLTATLGGMFLC, LITIFVAPECFSLCSYLLSGY, YLLMGGASSSILVHGFSWLYG, ISIALISITVGLGFKLSPAPF, WHLLLEILAILSMILGNLLAI, MLAYSSIGQIGYVIIGIIVGD, YMLFYISMNLGTFACIVLFGL, ALSLALCLLSLGGLPPLAGFF, and LYLFWCGWQAGLYLLVSIGLL.

This sequence belongs to the complex I subunit 2 family. In terms of assembly, NDH is composed of at least 16 different subunits, 5 of which are encoded in the nucleus.

Its subcellular location is the plastid. The protein localises to the chloroplast thylakoid membrane. The enzyme catalyses a plastoquinone + NADH + (n+1) H(+)(in) = a plastoquinol + NAD(+) + n H(+)(out). The catalysed reaction is a plastoquinone + NADPH + (n+1) H(+)(in) = a plastoquinol + NADP(+) + n H(+)(out). In terms of biological role, NDH shuttles electrons from NAD(P)H:plastoquinone, via FMN and iron-sulfur (Fe-S) centers, to quinones in the photosynthetic chain and possibly in a chloroplast respiratory chain. The immediate electron acceptor for the enzyme in this species is believed to be plastoquinone. Couples the redox reaction to proton translocation, and thus conserves the redox energy in a proton gradient. This chain is NAD(P)H-quinone oxidoreductase subunit 2 B, chloroplastic, found in Agrostis stolonifera (Creeping bentgrass).